Here is a 433-residue protein sequence, read N- to C-terminus: Serine hydroxymethyltransferase (433 aa).

(6S)-5,6,7,8-tetrahydrofolate contacts are provided by residues Leu-132 and 136 to 138; that span reads GHL. Lys-241 bears the N6-(pyridoxal phosphate)lysine mark.

It belongs to the SHMT family. In terms of assembly, homodimer. Pyridoxal 5'-phosphate is required as a cofactor.

The protein resides in the cytoplasm. The catalysed reaction is (6R)-5,10-methylene-5,6,7,8-tetrahydrofolate + glycine + H2O = (6S)-5,6,7,8-tetrahydrofolate + L-serine. It participates in one-carbon metabolism; tetrahydrofolate interconversion. It functions in the pathway amino-acid biosynthesis; glycine biosynthesis; glycine from L-serine: step 1/1. Functionally, catalyzes the reversible interconversion of serine and glycine with tetrahydrofolate (THF) serving as the one-carbon carrier. This reaction serves as the major source of one-carbon groups required for the biosynthesis of purines, thymidylate, methionine, and other important biomolecules. Also exhibits THF-independent aldolase activity toward beta-hydroxyamino acids, producing glycine and aldehydes, via a retro-aldol mechanism. In Rhodopseudomonas palustris (strain HaA2), this protein is Serine hydroxymethyltransferase.